The following is a 191-amino-acid chain: Putative zinc metalloprotease MJ0611 (191 aa).

Residues alanine 20–isoleucine 40 form a helical membrane-spanning segment. Histidine 49 contacts Zn(2+). The active site involves glutamate 50. Histidine 53 provides a ligand contact to Zn(2+). A run of 4 helical transmembrane segments spans residues leucine 73–valine 93, leucine 110–phenylalanine 130, glycine 133–phenylalanine 153, and proline 171–tryptophan 191.

Belongs to the peptidase M50B family. It depends on Zn(2+) as a cofactor.

It localises to the cell membrane. This is Putative zinc metalloprotease MJ0611 from Methanocaldococcus jannaschii (strain ATCC 43067 / DSM 2661 / JAL-1 / JCM 10045 / NBRC 100440) (Methanococcus jannaschii).